A 96-amino-acid polypeptide reads, in one-letter code: MTIRPLHDRVVVKRLEAEEKTASGIVLPGAAAEKPDMGEVIAVGAGKIGKDGARRPLDVKVGDKIIFGKYSGQTVKADGEELLVMREEDIFGIVEK.

Belongs to the GroES chaperonin family. Heptamer of 7 subunits arranged in a ring. Interacts with the chaperonin GroEL.

It localises to the cytoplasm. Functionally, together with the chaperonin GroEL, plays an essential role in assisting protein folding. The GroEL-GroES system forms a nano-cage that allows encapsulation of the non-native substrate proteins and provides a physical environment optimized to promote and accelerate protein folding. GroES binds to the apical surface of the GroEL ring, thereby capping the opening of the GroEL channel. The chain is Co-chaperonin GroES from Neisseria meningitidis serogroup A / serotype 4A (strain DSM 15465 / Z2491).